The primary structure comprises 720 residues: Neurochondrin (720 aa).

The protein belongs to the neurochondrin family.

The protein localises to the cytoplasm. The protein resides in the cytosol. It is found in the cell projection. It localises to the dendrite. Its subcellular location is the postsynapse. Its function is as follows. Probably involved in signal transduction, in the nervous system. Required for the spatial learning process. May also be involved in neurite outgrowth. The chain is Neurochondrin (ncdn) from Xenopus laevis (African clawed frog).